Here is a 621-residue protein sequence, read N- to C-terminus: Rab proteins geranylgeranyltransferase component A 2 (621 aa).

The interval V113 to A171 is disordered. Residues D115–L125 are compositionally biased toward polar residues. The segment covering P155 to L166 has biased composition (basic and acidic residues).

This sequence belongs to the Rab GDI family. As to quaternary structure, monomer. Heterotrimer composed of RABGGTA, RABGGTB and CHML; within this trimer, RABGGTA and RABGGTB form the catalytic component B, while CHML (component A) mediates Rab protein binding. Interacts with RAB1A, RAB7A and RAB27A, but has much lower affinity for RAB1A, RAB7A and RAB27A than CHM. Interacts with the non-phosphorylated forms of RAB3A, RAB3B, RAB3C, RAB3D, RAB5B, RAB5C, RAB8A, RAB8B, RAB10, RAB12, RAB35, and RAB43.

The protein resides in the cytoplasm. It localises to the cytosol. Its function is as follows. Substrate-binding subunit (component A) of the Rab geranylgeranyltransferase (GGTase) complex. Binds unprenylated Rab proteins and presents the substrate peptide to the catalytic component B. The component A is thought to be regenerated by transferring its prenylated Rab back to the donor membrane. Less effective than CHM in supporting prenylation of Rab3 family. The chain is Rab proteins geranylgeranyltransferase component A 2 (Chml) from Mus musculus (Mouse).